A 122-amino-acid polypeptide reads, in one-letter code: Flagellar protein FliT (122 aa).

The required for homodimerization stretch occupies residues 1-50; that stretch reads MERQQQLLAAYQQIHSLSSQMIALAQTERWEDLVELELAYVTAVESTAAF. The fliD binding stretch occupies residues 60–98; sequence LQELLRNKLQQILDNETELKRLLQQRMDQLKELIGQSTR.

Belongs to the FliT family. In terms of assembly, homodimer. Interacts with FliD and FlhC.

The protein localises to the cytoplasm. It localises to the cytosol. Its function is as follows. Dual-function protein that regulates the transcription of class 2 flagellar operons and that also acts as an export chaperone for the filament-capping protein FliD. As a transcriptional regulator, acts as an anti-FlhDC factor; it directly binds FlhC, thus inhibiting the binding of the FlhC/FlhD complex to class 2 promoters, resulting in decreased expression of class 2 flagellar operons. As a chaperone, effects FliD transition to the membrane by preventing its premature polymerization, and by directing it to the export apparatus. The sequence is that of Flagellar protein FliT from Serratia proteamaculans (strain 568).